A 55-amino-acid polypeptide reads, in one-letter code: Large ribosomal subunit protein bL33 (55 aa).

It belongs to the bacterial ribosomal protein bL33 family.

This Roseobacter denitrificans (strain ATCC 33942 / OCh 114) (Erythrobacter sp. (strain OCh 114)) protein is Large ribosomal subunit protein bL33.